The chain runs to 229 residues: Multiple organellar RNA editing factor 5, chloroplastic/mitochondrial (229 aa).

The transit peptide at 1-57 (MAKTLARSTASRITKRLISTSGATTPSPSYILSRRSTPVFSHAVGFISSLNRFTTIR) directs the protein to the chloroplast and mitochondrion.

This sequence belongs to the MORF family. As to quaternary structure, homodimer and heterodimers with MORF8/RIP1, MORF3/RIP3, MORF6/RIP6, MORF7/RIP7 and MORF9/RIP9.

It is found in the mitochondrion. It localises to the plastid. The protein localises to the chloroplast. Involved in organellar RNA editing. Required for the processing of few RNA editing sites in mitochondria. The protein is Multiple organellar RNA editing factor 5, chloroplastic/mitochondrial of Arabidopsis thaliana (Mouse-ear cress).